A 297-amino-acid chain; its full sequence is 4-hydroxy-tetrahydrodipicolinate synthase (297 aa).

Pyruvate is bound at residue Thr-46. The Proton donor/acceptor role is filled by Tyr-134. The active-site Schiff-base intermediate with substrate is Lys-162. Ile-204 contacts pyruvate.

The protein belongs to the DapA family. Homotetramer; dimer of dimers.

It is found in the cytoplasm. It catalyses the reaction L-aspartate 4-semialdehyde + pyruvate = (2S,4S)-4-hydroxy-2,3,4,5-tetrahydrodipicolinate + H2O + H(+). It functions in the pathway amino-acid biosynthesis; L-lysine biosynthesis via DAP pathway; (S)-tetrahydrodipicolinate from L-aspartate: step 3/4. Catalyzes the condensation of (S)-aspartate-beta-semialdehyde [(S)-ASA] and pyruvate to 4-hydroxy-tetrahydrodipicolinate (HTPA). The protein is 4-hydroxy-tetrahydrodipicolinate synthase of Stenotrophomonas maltophilia (strain K279a).